A 112-amino-acid polypeptide reads, in one-letter code: Low molecular weight protein antigen 6 (112 aa).

It localises to the secreted. This chain is Low molecular weight protein antigen 6 (cfp6), found in Mycobacterium bovis (strain ATCC BAA-935 / AF2122/97).